The primary structure comprises 353 residues: MSTLRTALTELVGVQHPVVQTGMGWVAGPRLVAGTANAGGLGILASATMTYTELESAITKTKTLTDKPFGVNIRADASDAPHRIDLLIRESVRVASFALAPKQELIAKLKAAGVVVIPSIGAAKHAKKVASWGADAVIVQGGEGGGHTGPVATTLLLPSVLDAVDIPVVAAGGFYDGRGLAAALAYGAAGVAMGTRFLLTQESTVPDSVKHEYLARGLQDTTVSRKVDGMPHRVLNTDLVNSLEHSGNMRGLVAAARNASKFKAMTGMKWSTLVKDGLAMKKSSDRTWQQIIMAANTPMLLKAGLVEGNTHAGVLASGQVVGLLDDLPTCKDLIDGIVADAIKRIDALGALRA.

FMN-binding positions include 22–24 (GMG), 171–173 (AGG), and 194–195 (GT).

It belongs to the nitronate monooxygenase family.

It carries out the reaction (3aS,4S,5R,7aS)-5-hydroxy-7a-methyl-1-oxo-octahydro-1H-indene-4-carboxyl-CoA + NAD(+) = (5R,7aS)-5-hydroxy-7a-methyl-1-oxo-2,3,5,6,7,7a-hexahydro-1H-indene-carboxyl-CoA + NADH + H(+). It functions in the pathway steroid metabolism; cholesterol degradation. Its function is as follows. Involved in the final steps of cholesterol and steroid degradation. Probably catalyzes the introduction of a double bound into the C ring of 5OH-HIC-CoA, leading to the formation of (5R,7aS)-5-hydroxy-7a-methyl-1-oxo-3,5,6,7-tetrahydro-2H-indene-4-carboxyl-CoA. The protein is (3aS,4S,5R,7aS)-5-hydroxy-7a-methyl-1-oxo-octahydro-1H-indene-4-carboxyl-CoA dehydrogenase of Rhodococcus jostii (strain RHA1).